The primary structure comprises 786 residues: Pentatricopeptide repeat-containing protein At2g22070 (786 aa).

PPR repeat units lie at residues 48-78 (SVYLMNNLMNVYSKTGYALHARKLFDEMPLR), 79-109 (TAFSWNTVLSAYSKRGDMDSTCEFFDQLPQR), 110-144 (DSVSWTTMIVGYKNIGQYHKAIRVMGDMVKEGIEP), 145-179 (TQFTLTNVLASVAATRCMETGKKVHSFIVKLGLRG), 180-214 (NVSVSNSLLNMYAKCGDPMMAKFVFDRMVVRDISS), 215-241 (WNAMIALHMQVGQMDLAMAQFEQMAER), 242-276 (DIVTWNSMISGFNQRGYDLRALDIFSKMLRDSLLS), 278-312 (DRFTLASVLSACANLEKLCIGKQIHSHIVTTGFDI), 313-347 (SGIVLNALISMYSRCGGVETARRLIEQRGTKDLKI), 350-376 (FTALLDGYIKLGDMNQAKNIFVSLKDR), 377-411 (DVVAWTAMIVGYEQHGSYGEAINLFRSMVGGGQRP), 412-446 (NSYTLAAMLSVASSLASLSHGKQIHGSAVKSGEIY), 447-477 (SVSVSNALITMYAKAGNITSASRAFDLIRCE), 479-513 (DTVSWTSMIIALAQHGHAEEALELFETMLMEGLRP), 514-548 (DHITYVGVFSACTHAGLVNQGRQYFDMMKDVDKII), and 550-580 (TLSHYACMVDLFGRAGLLQEAQEFIEKMPIE). The segment at 585–660 (TWGSLLSACR…EQGFSWIEVK (76 aa)) is type E motif. The type E(+) motif stretch occupies residues 661 to 691 (HKVHVFGVEDGTHPEKNEIYMTMKKIWDEIK). The segment at 692-786 (KMGYVPDTAS…DGFCSCRDYW (95 aa)) is type DYW motif.

It belongs to the PPR family. PCMP-H subfamily.

The sequence is that of Pentatricopeptide repeat-containing protein At2g22070 (PCMP-H41) from Arabidopsis thaliana (Mouse-ear cress).